A 175-amino-acid polypeptide reads, in one-letter code: UPF0398 protein SPH_0478 (175 aa).

This sequence belongs to the UPF0398 family.

This chain is UPF0398 protein SPH_0478, found in Streptococcus pneumoniae (strain Hungary19A-6).